We begin with the raw amino-acid sequence, 336 residues long: 3-isopropylmalate dehydrogenase (336 aa).

The substrate site is built by Arg-87, Arg-97, Arg-121, and Asp-211. Positions 211, 235, and 239 each coordinate Mg(2+). 271-283 contributes to the NAD(+) binding site; that stretch reads GSAPDIAGQGIAD.

Belongs to the isocitrate and isopropylmalate dehydrogenases family. LeuB type 2 subfamily. Homodimer. Requires Mg(2+) as cofactor. Mn(2+) is required as a cofactor.

It localises to the cytoplasm. The catalysed reaction is (2R,3S)-3-isopropylmalate + NAD(+) = 4-methyl-2-oxopentanoate + CO2 + NADH. It functions in the pathway amino-acid biosynthesis; L-leucine biosynthesis; L-leucine from 3-methyl-2-oxobutanoate: step 3/4. Catalyzes the oxidation of 3-carboxy-2-hydroxy-4-methylpentanoate (3-isopropylmalate) to 3-carboxy-4-methyl-2-oxopentanoate. The product decarboxylates to 4-methyl-2 oxopentanoate. This is 3-isopropylmalate dehydrogenase from Rhodococcus opacus (strain B4).